Reading from the N-terminus, the 228-residue chain is MAREKKTCVECGHKVKSLFIQYSPGNFRLMKCENCEEVADEYVECELLIIFIDLILHKTKAYRHLLYNVVNQESANVQHLLWKLVLAYLLLDTYRSLLLRRTNDGSNVSMSFLFESLEVLVNVLSANFAFVFSFAFAAKLMLVMPRGKEILLTILISSYVKIFLFAMPVWEFPVSVIFIVDMLVLTSNAVALKVMTESATSRCLAVCFIAHSIRFLVDQISGHLGSVM.

A run of 2 helical transmembrane segments spans residues 37 to 57 (EVAD…LILH) and 80 to 100 (LLWK…LLLR). An N-linked (GlcNAc...) asparagine glycan is attached at asparagine 107. A run of 3 helical transmembrane segments spans residues 123–143 (VLSA…LMLV), 150–170 (ILLT…MPVW), and 176–196 (VIFI…KVMT).

Belongs to the ARV1 family. Restricted to tissues in which cells are actively dividing or expanding. Mostly expressed in roots and flowers, and, to a lower extent, in stems and leaves.

The protein resides in the endoplasmic reticulum membrane. Its function is as follows. Mediator of sterol homeostasis involved in sterol uptake, trafficking and distribution into membranes. Also regulates the sphingolipid metabolism. This is Protein ARV 2 from Arabidopsis thaliana (Mouse-ear cress).